We begin with the raw amino-acid sequence, 393 residues long: NAD(P)H-quinone oxidoreductase subunit H, chloroplastic (393 aa).

Belongs to the complex I 49 kDa subunit family. In terms of assembly, NDH is composed of at least 16 different subunits, 5 of which are encoded in the nucleus.

The protein resides in the plastid. It localises to the chloroplast thylakoid membrane. The catalysed reaction is a plastoquinone + NADH + (n+1) H(+)(in) = a plastoquinol + NAD(+) + n H(+)(out). It carries out the reaction a plastoquinone + NADPH + (n+1) H(+)(in) = a plastoquinol + NADP(+) + n H(+)(out). Its function is as follows. NDH shuttles electrons from NAD(P)H:plastoquinone, via FMN and iron-sulfur (Fe-S) centers, to quinones in the photosynthetic chain and possibly in a chloroplast respiratory chain. The immediate electron acceptor for the enzyme in this species is believed to be plastoquinone. Couples the redox reaction to proton translocation, and thus conserves the redox energy in a proton gradient. In Jasminum nudiflorum (Winter jasmine), this protein is NAD(P)H-quinone oxidoreductase subunit H, chloroplastic.